We begin with the raw amino-acid sequence, 208 residues long: Coiled-coil domain-containing protein 25 (208 aa).

Residues 1 to 105 are Extracellular-facing; it reads MVFYFTSSSV…SNLKKTADMD (105 aa). The DNA-binding stretch occupies residues 21–25; the sequence is KDKYE. An N6-acetyllysine modification is found at K23. Residues 106-122 traverse the membrane as a helical segment; it reads VGQIGFHRQKDVKIVTV. A coiled-coil region spans residues 117–187; it reads VKIVTVEKKV…REMDELRSYS (71 aa). Residues 123 to 208 are Cytoplasmic-facing; it reads EKKVNEILNR…QDGNDSDEFM (86 aa). Over residues 144–184 the composition is skewed to basic and acidic residues; the sequence is LAAEKEGRDREERNEKKAQIQEMKRKEKEEMKKKREMDELR. Residues 144 to 208 form a disordered region; the sequence is LAAEKEGRDR…QDGNDSDEFM (65 aa). Phosphoserine is present on S204.

This sequence belongs to the CCDC25 family. As to quaternary structure, interacts (via cytoplasmic region) with ILK.

The protein localises to the cell membrane. It localises to the endomembrane system. Transmembrane receptor that senses neutrophil extracellular traps (NETs) and triggers the ILK-PARVB pathway to enhance cell motility. NETs are mainly composed of DNA fibers and are released by neutrophils to bind pathogens during inflammation. Formation of NETs is also associated with cancer metastasis, NET-DNA acting as a chemotactic factor to attract cancer cells. Specifically binds NETs on its extracellular region, in particular the 8-OHdG-enriched DNA present in NETs, and recruits ILK, initiating the ILK-PARVB cascade to induce cytoskeleton rearrangement and directional migration of cells. In the context of cancer, promotes cancer metastasis by sensing NETs and promoting migration of tumor cells. This chain is Coiled-coil domain-containing protein 25, found in Mus musculus (Mouse).